The chain runs to 134 residues: Arginine decarboxylase proenzyme (134 aa).

Residue S82 is the Schiff-base intermediate with substrate; via pyruvic acid of the active site. Residue S82 is modified to Pyruvic acid (Ser); by autocatalysis. The active-site Proton acceptor; for processing activity is the H87. Residue C102 is the Proton donor; for catalytic activity of the active site.

This sequence belongs to the prokaryotic AdoMetDC family. Type 1 subfamily. Heterooctamer of four alpha and four beta chains arranged as a tetramer of alpha/beta heterodimers. Pyruvate is required as a cofactor. In terms of processing, is synthesized initially as an inactive proenzyme. Formation of the active enzyme involves a self-maturation process in which the active site pyruvoyl group is generated from an internal serine residue via an autocatalytic post-translational modification. Two non-identical subunits are generated from the proenzyme in this reaction, and the pyruvate is formed at the N-terminus of the alpha chain, which is derived from the carboxyl end of the proenzyme. The post-translation cleavage follows an unusual pathway, termed non-hydrolytic serinolysis, in which the side chain hydroxyl group of the serine supplies its oxygen atom to form the C-terminus of the beta chain, while the remainder of the serine residue undergoes an oxidative deamination to produce ammonia and the pyruvoyl group blocking the N-terminus of the alpha chain.

The catalysed reaction is L-arginine + H(+) = agmatine + CO2. It functions in the pathway amine and polyamine biosynthesis; agmatine biosynthesis; agmatine from L-arginine: step 1/1. Its activity is regulated as follows. Highly competitively inhibited by L-argininamide and L-arginine methyl ester. Also inhibited by alpha-difluoromethylarginine. Is not stimulated by potassium chloride as observed for other decarboxylases. Functionally, specifically catalyzes the decarboxylation of L-arginine to agmatine. Is also able to decarboxylate L-canavanine, although less efficiently. Has no S-adenosylmethionine decarboxylase (AdoMetDC) activity. The chain is Arginine decarboxylase proenzyme from Saccharolobus solfataricus (strain ATCC 35092 / DSM 1617 / JCM 11322 / P2) (Sulfolobus solfataricus).